The following is a 309-amino-acid chain: Ribosomal protein L11 methyltransferase (309 aa).

Residues T144, G165, D187, and N235 each contribute to the S-adenosyl-L-methionine site.

Belongs to the methyltransferase superfamily. PrmA family.

Its subcellular location is the cytoplasm. It catalyses the reaction L-lysyl-[protein] + 3 S-adenosyl-L-methionine = N(6),N(6),N(6)-trimethyl-L-lysyl-[protein] + 3 S-adenosyl-L-homocysteine + 3 H(+). Methylates ribosomal protein L11. This is Ribosomal protein L11 methyltransferase from Prochlorococcus marinus (strain MIT 9215).